The sequence spans 573 residues: Ascochitine biosynthesis cluster transcriptional regulator (573 aa).

It is found in the nucleus. Its function is as follows. Transcription factor that regulates the expression of the gene cluster that mediates the biosynthesis of the mycotoxin ascochitine, an o-quinone methide that plays a possible protective role against other microbial competitors in nature and is considered to be important for pathogenicity of legume-associated Didymella species. The chain is Ascochitine biosynthesis cluster transcriptional regulator from Didymella fabae (Leaf and pod spot disease fungus).